Consider the following 379-residue polypeptide: Protein hairy (379 aa).

A disordered region spans residues 20–50 (STQQQQQQQQHKEAPIKSDRRSNKPIMEKRR). Residues 29–47 (QHKEAPIKSDRRSNKPIME) are compositionally biased toward basic and acidic residues. Positions 36–55 (KSDRRSNKPIMEKRRRARIN) are interaction with Topors. A bHLH domain is found at 38–95 (DRRSNKPIMEKRRRARINNCLNELKTLILDATKKDPARHSKLEKADILEKTVKHLQEL). Residues 114–143 (FKAGFADCANEVSRFPGLDSTQRRRLLQHL) form the Orange domain. 2 disordered regions span residues 167–208 (QSLH…NTTA) and 298–345 (QRTA…VKPS). Composition is skewed to low complexity over residues 182–207 (PEQEPSVTPVAASGNNNSSSNNTNTT) and 301–328 (ASTGSASSHSSAGYESAPSSSSSRGSYA). Residues 376-379 (WRPW) carry the WRPW motif motif.

In terms of assembly, transcription repression requires formation of a complex with a corepressor protein (Groucho).

It localises to the nucleus. Its function is as follows. Pair-rule protein that regulates embryonic segmentation and adult bristle patterning. Transcriptional repressor of genes that require a bHLH protein for their transcription (e.g. ftz). The sequence is that of Protein hairy from Drosophila virilis (Fruit fly).